The following is a 381-amino-acid chain: Anhydro-N-acetylmuramic acid kinase (381 aa).

13–20 provides a ligand contact to ATP; the sequence is GTSLDGID.

It belongs to the anhydro-N-acetylmuramic acid kinase family.

The enzyme catalyses 1,6-anhydro-N-acetyl-beta-muramate + ATP + H2O = N-acetyl-D-muramate 6-phosphate + ADP + H(+). It participates in amino-sugar metabolism; 1,6-anhydro-N-acetylmuramate degradation. It functions in the pathway cell wall biogenesis; peptidoglycan recycling. In terms of biological role, catalyzes the specific phosphorylation of 1,6-anhydro-N-acetylmuramic acid (anhMurNAc) with the simultaneous cleavage of the 1,6-anhydro ring, generating MurNAc-6-P. Is required for the utilization of anhMurNAc either imported from the medium or derived from its own cell wall murein, and thus plays a role in cell wall recycling. This chain is Anhydro-N-acetylmuramic acid kinase, found in Francisella tularensis subsp. novicida (strain U112).